The primary structure comprises 167 residues: uncharacterized protein (167 aa).

It belongs to the A.longa ORF167/ORF288 family.

It localises to the plastid. This is an uncharacterized protein from Euglena longa (Euglenophycean alga).